The primary structure comprises 304 residues: Pseudouridine-5'-phosphate glycosidase (304 aa).

Glutamate 25 (proton donor) is an active-site residue. 2 residues coordinate substrate: lysine 88 and valine 108. Residue aspartate 140 coordinates Mn(2+). 142 to 144 lines the substrate pocket; that stretch reads SAD. Lysine 161 functions as the Nucleophile in the catalytic mechanism.

This sequence belongs to the pseudouridine-5'-phosphate glycosidase family. In terms of assembly, homotrimer. Requires Mn(2+) as cofactor.

It carries out the reaction D-ribose 5-phosphate + uracil = psi-UMP + H2O. In terms of biological role, catalyzes the reversible cleavage of pseudouridine 5'-phosphate (PsiMP) to ribose 5-phosphate and uracil. Functions biologically in the cleavage direction, as part of a pseudouridine degradation pathway. The polypeptide is Pseudouridine-5'-phosphate glycosidase (Paracoccus denitrificans (strain Pd 1222)).